Reading from the N-terminus, the 179-residue chain is uncharacterized protein (179 aa).

This is an uncharacterized protein from Sulfolobus islandicus rod-shaped virus 1 (SIRV-1).